The chain runs to 352 residues: Aliphatic aldoxime dehydratase (352 aa).

Residue Ser-219 participates in an aliphatic aldoxime binding. Residue His-299 coordinates heme b. An aliphatic aldoxime is bound at residue His-320. Residue His-320 is part of the active site.

This sequence belongs to the heme-containing dehydratase family. Homodimer. It depends on heme b as a cofactor. The cofactor is Ca(2+).

The enzyme catalyses an aliphatic aldoxime = a nitrile + H2O. Its activity is regulated as follows. Active when the heme iron is in the ferrous state. Is very sensitive to AgNO(3), is also inhibited by hydroxylamine and phenylhydrazine, and hardly inhibited by thiol reagents. Not sensitive to chelating agents and serine-modifying reagents. Catalyzes the dehydration of aldoximes to their corresponding nitrile. Aliphatic aldoximes are more effective substrates than aromatic aldoximes. Shows high activity with butyraldoxime and acetaldoxime, but only weak activity with the aromatic aldoxime pyridine-2-aldoxime. Cannot use benzaldoxime, isonitrosoacetophenone and pyridine-4-aldoxime. Is involved in the metabolism of aldoxime in vivo. This is Aliphatic aldoxime dehydratase from Pseudomonas chlororaphis (Pseudomonas aureofaciens).